A 324-amino-acid polypeptide reads, in one-letter code: MKSALCNRFFILLPWILIVIIMLDVDPRRPAPQLTSRPYFSPHTVGCGGSRVPLRRSSPGRDAAEKRNESRPQLQPEPRLPTIYAITPTYSRPVQKAELTRLANTFRQVAQLHWILVEDRATRSELVSSFLARAGLPNTHLHVPTPRRYKRPWLPRATEQRNAGLAWLRQRHQHQSAQPGVLFFADDDNTYSLELFQEMRTTRKVSVWPVGLVGGRRYERPLVKNGKVVGWYTGWREDRPFAIDMAGFAVSLQVILSNPKAVFKRRGSQPGMQESDFLKQITTVDELEPKANNCTKVLVWHTRTEKVNLANEPKYHMDTVNIEV.

Over 1 to 2 the chain is Cytoplasmic; that stretch reads MK. Residues 3 to 23 form a helical; Signal-anchor for type II membrane protein membrane-spanning segment; it reads SALCNRFFILLPWILIVIIML. Residues 24-324 lie on the Lumenal side of the membrane; that stretch reads DVDPRRPAPQ…YHMDTVNIEV (301 aa). The interval 34–78 is disordered; the sequence is LTSRPYFSPHTVGCGGSRVPLRRSSPGRDAAEKRNESRPQLQPEP. A glycan (N-linked (GlcNAc...) asparagine) is linked at Asn-68. Asp-188 contributes to the Mn(2+) binding site. Catalysis depends on Glu-274, which acts as the Proton acceptor. Residue Asn-293 is glycosylated (N-linked (GlcNAc...) asparagine).

It belongs to the glycosyltransferase 43 family. Homodimer. It depends on Mn(2+) as a cofactor. In terms of tissue distribution, expressed in the cerebral cortex, cerebellum and whole brain.

The protein resides in the golgi apparatus membrane. It catalyses the reaction 3-O-(beta-D-galactosyl-(1-&gt;3)-beta-D-galactosyl-(1-&gt;4)-beta-D-xylosyl)-L-seryl-[protein] + UDP-alpha-D-glucuronate = 3-O-(beta-D-GlcA-(1-&gt;3)-beta-D-Gal-(1-&gt;3)-beta-D-Gal-(1-&gt;4)-beta-D-Xyl)-L-seryl-[protein] + UDP + H(+). Its pathway is protein modification; protein glycosylation. In terms of biological role, involved in the biosynthesis of L2/HNK-1 carbohydrate epitope on both glycolipids and glycoproteins. Substrates include asialo-orosomucoid (ASOR), paragloboside (lacto-N-neotetraosylceramide), Gal-beta-1,4-GlcNAc-beta-1,3-Gal-beta-1,4-Glc-pyridylamine and Gal-beta-1,3-GlcNAc-beta-1,3-Gal-beta-1,4-Glc-pyridylamine. The chain is Galactosylgalactosylxylosylprotein 3-beta-glucuronosyltransferase 2 (B3gat2) from Rattus norvegicus (Rat).